Reading from the N-terminus, the 274-residue chain is MRKVAIYGKGGIGKSTTTQNTVAALAEMGKKVMVVGCDPKADSTRLLLGGLQQKTVLDTLREEGEEVELEDIIKGGYKNTRCTESGGPEPGVGCAGRGIITSVNLLEQLGAYDDEWELDYVFYDVLGDVVCGGFAMPIRDGKAEEIYIVCSGEMMAMYAANNICKGILKYADAGGVRLGGLICNSRQVENEKAMIEELARKIGTQMIHFVPRDNFVQRAEINRKTVIDYDPTHKQADEYRALAQKINDNKMFVIPKPLEIEELESLLIEFGIAN.

8 to 15 (GKGGIGKS) contributes to the ATP binding site. Cys-94 is a [4Fe-4S] cluster binding site. Arg-97 carries the ADP-ribosylarginine; by dinitrogenase reductase ADP-ribosyltransferase modification. [4Fe-4S] cluster is bound at residue Cys-131.

The protein belongs to the NifH/BchL/ChlL family. Homodimer. [4Fe-4S] cluster is required as a cofactor. In terms of processing, the reversible ADP-ribosylation of Arg-97 inactivates the nitrogenase reductase and regulates nitrogenase activity.

It carries out the reaction N2 + 8 reduced [2Fe-2S]-[ferredoxin] + 16 ATP + 16 H2O = H2 + 8 oxidized [2Fe-2S]-[ferredoxin] + 2 NH4(+) + 16 ADP + 16 phosphate + 6 H(+). Its function is as follows. The key enzymatic reactions in nitrogen fixation are catalyzed by the nitrogenase complex, which has 2 components: the iron protein and the molybdenum-iron protein. The chain is Nitrogenase iron protein from Chlorobium phaeovibrioides (strain DSM 265 / 1930) (Prosthecochloris vibrioformis (strain DSM 265)).